The sequence spans 156 residues: MKIVEGNLSVDKSKKVAIINARFNHFITDRLVEGAKDAYARHGGNPEELDLILVPGAFEIPFALDKALASGKYDAVCCLGAVIRGATPHFDYVSAEATKGVANVTLKYGKPATFGVLTVDSIEQAIERAGTKAGNKGAEAMAGLIELINLYGSLEK.

5-amino-6-(D-ribitylamino)uracil-binding positions include F23, 57 to 59 (AFE), and 81 to 83 (AVI). Position 86 to 87 (86 to 87 (AT)) interacts with (2S)-2-hydroxy-3-oxobutyl phosphate. H89 (proton donor) is an active-site residue. F114 provides a ligand contact to 5-amino-6-(D-ribitylamino)uracil. Residue R128 participates in (2S)-2-hydroxy-3-oxobutyl phosphate binding.

The protein belongs to the DMRL synthase family.

It catalyses the reaction (2S)-2-hydroxy-3-oxobutyl phosphate + 5-amino-6-(D-ribitylamino)uracil = 6,7-dimethyl-8-(1-D-ribityl)lumazine + phosphate + 2 H2O + H(+). The protein operates within cofactor biosynthesis; riboflavin biosynthesis; riboflavin from 2-hydroxy-3-oxobutyl phosphate and 5-amino-6-(D-ribitylamino)uracil: step 1/2. Functionally, catalyzes the formation of 6,7-dimethyl-8-ribityllumazine by condensation of 5-amino-6-(D-ribitylamino)uracil with 3,4-dihydroxy-2-butanone 4-phosphate. This is the penultimate step in the biosynthesis of riboflavin. This is 6,7-dimethyl-8-ribityllumazine synthase from Sulfurovum sp. (strain NBC37-1).